We begin with the raw amino-acid sequence, 434 residues long: Cobyrinate a,c-diamide synthase (434 aa).

A GATase cobBQ-type domain is found at Lys-240–Arg-430. Catalysis depends on Cys-322, which acts as the Nucleophile.

The protein belongs to the CobB/CbiA family. It depends on Mg(2+) as a cofactor.

It carries out the reaction cob(II)yrinate + 2 L-glutamine + 2 ATP + 2 H2O = cob(II)yrinate a,c diamide + 2 L-glutamate + 2 ADP + 2 phosphate + 2 H(+). The protein operates within cofactor biosynthesis; adenosylcobalamin biosynthesis; cob(II)yrinate a,c-diamide from sirohydrochlorin (anaerobic route): step 10/10. Functionally, catalyzes the ATP-dependent amidation of the two carboxylate groups at positions a and c of cobyrinate, using either L-glutamine or ammonia as the nitrogen source. The protein is Cobyrinate a,c-diamide synthase of Sulfolobus acidocaldarius (strain ATCC 33909 / DSM 639 / JCM 8929 / NBRC 15157 / NCIMB 11770).